Reading from the N-terminus, the 716-residue chain is Polyribonucleotide nucleotidyltransferase (716 aa).

Residues Asp493 and Asp499 each coordinate Mg(2+). The region spanning 560–619 (PRMITIKINPEKIRDVIGKGGSVIRALTEETGTTIDISDDGVVTIASTSSEGMAEAKKRI) is the KH domain. The S1 motif domain occupies 629–697 (GQVYEGTVLK…EKGRVRLSAK (69 aa)).

This sequence belongs to the polyribonucleotide nucleotidyltransferase family. The cofactor is Mg(2+).

It localises to the cytoplasm. The enzyme catalyses RNA(n+1) + phosphate = RNA(n) + a ribonucleoside 5'-diphosphate. Its function is as follows. Involved in mRNA degradation. Catalyzes the phosphorolysis of single-stranded polyribonucleotides processively in the 3'- to 5'-direction. In Paraburkholderia xenovorans (strain LB400), this protein is Polyribonucleotide nucleotidyltransferase.